Consider the following 837-residue polypeptide: MAEPSQAPTPAPAAQPRPLQSPAPAPTPTPAPSPASAPIPTPTPAPAPAPAAAPAGSTGTGGPGVGSGGAGSGGDPARPGLSQQQRASQRKAQVRGLPRAKKLEKLGVFSACKANETCKCNGWKNPKPPTAPRMDLQQPAANLSELCRSCEHPLADHVSHLENVSEDEINRLLGMVVDVENLFMSVHKEEDTDTKQVYFYLFKLLRKCILQMTRPVVEGSLGSPPFEKPNIEQGVLNFVQYKFSHLAPRERQTMFELSKMFLLCLNYWKLETPAQFRQRSQAEDVATYKVNYTRWLCYCHVPQSCDSLPRYETTHVFGRSLLRSIFTVTRRQLLEKFRVEKDKLVPEKRTLILTHFPKFLSMLEEEIYGANSPIWESGFTMPPSEGTQLVPRPASVSAAVVPSTPIFSPSMGGGSNSSLSLDSAGAEPMPGEKRTLPENLTLEDAKRLRVMGDIPMELVNEVMLTITDPAAMLGPETSLLSANAARDETARLEERRGIIEFHVIGNSLTPKANRRVLLWLVGLQNVFSHQLPRMPKEYIARLVFDPKHKTLALIKDGRVIGGICFRMFPTQGFTEIVFCAVTSNEQVKGYGTHLMNHLKEYHIKHNILYFLTYADEYAIGYFKKQGFSKDIKVPKSRYLGYIKDYEGATLMECELNPRIPYTELSHIIKKQKEIIKKLIERKQAQIRKVYPGLSCFKEGVRQIPVESVPGIRETGWKPLGKEKGKELKDPDQLYTTLKNLLAQIKSHPSAWPFMEPVKKSEAPDYYEVIRFPIDLKTMTERLRSRYYVTRKLFVADLQRVIANCREYNPPDSEYCRCASALEKFFYFKLKEGGLIDK.

Residues 1-99 (MAEPSQAPTP…RKAQVRGLPR (99 aa)) are disordered. Position 2 is an N-acetylalanine (A2). The segment covering 7-51 (APTPAPAAQPRPLQSPAPAPTPTPAPSPASAPIPTPTPAPAPAPA) has biased composition (pro residues). Residues 58-74 (TGTGGPGVGSGGAGSGG) are compositionally biased toward gly residues. The span at 75–87 (DPARPGLSQQQRA) shows a compositional bias: low complexity. Over residues 88-99 (SQRKAQVRGLPR) the composition is skewed to basic residues. Position 307 is a phosphoserine (S307). Residues 407–434 (FSPSMGGGSNSSLSLDSAGAEPMPGEKR) form a disordered region. A compositionally biased stretch (low complexity) spans 416–425 (NSSLSLDSAG). The 154-residue stretch at 503–656 (VIGNSLTPKA…GATLMECELN (154 aa)) folds into the N-acetyltransferase domain. K549 is subject to N6-acetyllysine. The Proton donor/acceptor role is filled by E575. Residues 579 to 581 (CAV), 586 to 592 (QVKGYGT), and Y617 contribute to the acetyl-CoA site. Residues 579–581 (CAV), 586–592 (QVKGYGT), and Y617 contribute to the succinyl-CoA site. Residues 639–648 (LGYIKDYEGA) are loop 3. Residue K728 forms a Glycyl lysine isopeptide (Lys-Gly) (interchain with G-Cter in SUMO2) linkage. The Bromo domain maps to 728–832 (KDPDQLYTTL…KFFYFKLKEG (105 aa)). T735 is subject to Phosphothreonine. Residues K759 and K791 each participate in a glycyl lysine isopeptide (Lys-Gly) (interchain with G-Cter in SUMO2) cross-link.

It belongs to the acetyltransferase family. GCN5 subfamily. Homooligomer; may form a tetramer of homodimers. Interacts with EP300, CREBBP and ADA2. Component of the TFTC-HAT complex, at least composed of TAF5L, TAF6L, TAF3, TADA3L, SUPT3H/SPT3, TAF2/TAFII150, TAF4/TAFII135, TAF5/TAFII100, KAT2A/GCN5L2, TAF10 and TRRAP. Component of the STAGA transcription coactivator-HAT complex, at least composed of SUPT3H, KAT2A, SUPT7L, TAF5L, TAF6L, TADA3L, TAD1L, TAF10, TAF12, TRRAP and TAF9. The STAGA core complex is associated with a subcomplex required for histone deubiquitination composed of ATXN7L3, ENY2 and USP22. Component of the ADA2A-containing complex (ATAC), composed of KAT14, KAT2A, TADA2L, TADA3L, ZZ3, MBIP, WDR5, YEATS2, CCDC101 and DR1. In the complex, it probably interacts directly with KAT14, MBIP and WDR5. Interacts with PML. Interacts with CEBPB. Interacts with TACC1, TACC2 and TACC3. Interacts with RELA. Interacts with NFATC2. Interacts with TBX5. Interacts with PLK4. Associates with the 2-oxoglutarate dehydrogenase complex. Interacts with XPC; leading to KAT2A recruitment to promoters and subsequent acetylation of histones. Interacts with ERCC3/XPB; leading to KAT2A recruitment to promoters and subsequent acetylation of histones. Interacts with ISL1. Interactions of ISL1 with MLIP1 or KAT2A may be mutually exclusive. In terms of assembly, (Microbial infection) Interacts with and acetylates HIV-1 Tat. Acetylated at Lys-549, inhibiting the protein acetyltransferase activity. Deacetylation at Lys-549 by SIRT6 promotes phosphorylation at Ser-307 and Thr-735 and subsequent activation of the protein acetyltransferase activity, leading to acetylation and inactivation of PPARGC1A. Expressed in all tissues tested.

It is found in the nucleus. The protein resides in the chromosome. Its subcellular location is the cytoplasm. It localises to the cytoskeleton. The protein localises to the microtubule organizing center. It is found in the centrosome. It catalyses the reaction L-lysyl-[histone] + acetyl-CoA = N(6)-acetyl-L-lysyl-[histone] + CoA + H(+). The catalysed reaction is L-lysyl-[protein] + acetyl-CoA = N(6)-acetyl-L-lysyl-[protein] + CoA + H(+). It carries out the reaction succinyl-CoA + L-lysyl-[protein] = N(6)-succinyl-L-lysyl-[protein] + CoA + H(+). The enzyme catalyses glutaryl-CoA + L-lysyl-[protein] = N(6)-glutaryl-L-lysyl-[protein] + CoA + H(+). Its function is as follows. Protein lysine acyltransferase that can act as a acetyltransferase, glutaryltransferase, succinyltransferase or malonyltransferase, depending on the context. Acts as a histone lysine succinyltransferase: catalyzes succinylation of histone H3 on 'Lys-79' (H3K79succ), with a maximum frequency around the transcription start sites of genes. Succinylation of histones gives a specific tag for epigenetic transcription activation. Association with the 2-oxoglutarate dehydrogenase complex, which provides succinyl-CoA, is required for histone succinylation. In different complexes, functions either as an acetyltransferase (HAT) or as a succinyltransferase: in the SAGA and ATAC complexes, acts as a histone acetyltransferase. Has significant histone acetyltransferase activity with core histones, but not with nucleosome core particles. Has a a strong preference for acetylation of H3 at 'Lys-9' (H3K9ac). Acetylation of histones gives a specific tag for epigenetic transcription activation. Recruited by the XPC complex at promoters, where it specifically mediates acetylation of histone variant H2A.Z.1/H2A.Z, thereby promoting expression of target genes. Involved in long-term memory consolidation and synaptic plasticity: acts by promoting expression of a hippocampal gene expression network linked to neuroactive receptor signaling. Acts as a positive regulator of T-cell activation: upon TCR stimulation, recruited to the IL2 promoter following interaction with NFATC2 and catalyzes acetylation of histone H3 at 'Lys-9' (H3K9ac), leading to promote IL2 expression. Required for growth and differentiation of craniofacial cartilage and bone by regulating acetylation of histone H3 at 'Lys-9' (H3K9ac). Regulates embryonic stem cell (ESC) pluripotency and differentiation. Also acetylates non-histone proteins, such as CEBPB, MRE11, PPARGC1A, PLK4 and TBX5. Involved in heart and limb development by mediating acetylation of TBX5, acetylation regulating nucleocytoplasmic shuttling of TBX5. Acts as a negative regulator of centrosome amplification by mediating acetylation of PLK4. Acts as a negative regulator of gluconeogenesis by mediating acetylation and subsequent inactivation of PPARGC1A. Also acts as a histone glutaryltransferase: catalyzes glutarylation of histone H4 on 'Lys-91' (H4K91glu), a mark that destabilizes nucleosomes by promoting dissociation of the H2A-H2B dimers from nucleosomes. (Microbial infection) In case of HIV-1 infection, it is recruited by the viral protein Tat. Regulates Tat's transactivating activity and may help inducing chromatin remodeling of proviral genes. This is Histone acetyltransferase KAT2A from Homo sapiens (Human).